Consider the following 1418-residue polypeptide: Alpha-latrotoxin-Lhe1a (1418 aa).

Positions 1-20 are cleaved as a signal peptide; the sequence is MIFVGETMERANHSLVRLRR. The interval 17–20 is furin-like endopeptidase recognition region; it reads RLRR. The interval 238-257 is helix H8 is the probable transmembrane region of the tetrameric pore inserted in the target cell membrane; sequence VLYALLYGTQTYISVMFFLL. Cys-413 and Cys-1066 are oxidised to a cystine. ANK repeat units lie at residues 458–489, 490–521, 525–554, 559–589, 593–622, 626–656, 660–690, 695–723, 729–758, 762–791, 795–824, 828–857, 862–891, 895–924, 928–957, 971–1003, 1004–1033, 1035–1064, 1068–1097, 1101–1131, 1137–1166, and 1170–1199; these read LYNAASNPDSAVGFKEFTKLNYDGANIRATFD, QGRTIFHAVAKSGNDKILFGLTFLVKSTELNQ, KGYTPIHVAADSGNAGIVNLLIQRGVSINS, FLQTPLHLAAQRGFVNTFQRLMESSEININE, DGFTPLHYAVRGGERILEAFMNQIGIDVNA, KGLTPFHLAIIKNDWQVASTLLRNKKVDINA, NNMTALHYAAILGYLETTKQLINLKEINANV, GLLSALHYAILYKHDDVASFLLRSSNVNV, GGITPLHLAVMQGRKQVLSLMFNIGVNIEQ, EKYTPLHLAAMSKYPELIQILLDQDSNFEA, SGATPLHLATFKGKSQAALILLNNEVNWRD, NGQMPIHGAATTGLLDVAQAIISIDATVLD, NSDTPLNLAAQNSHIDAVKYFIDQGADINT, NGHAPLLAFSKKGNLDMVKYLFDKNANVYI, NGMNFFYYAVRNGHLNIIKYAMSEKDKFEW, EECAISHFAVCDAVQFDKIEIVKFFIGTLGNFN, ICGPLHQAARYGHLHIVKYLVEEEVLSVDG, KTDTPLCYASENGHLAVVQYLVSNGAKVNH, NGMTAIDKAITKNHLQVVQFLAANGVDFRR, RGATPFLTAVAENAFDIAEYLIREKRQDINI, DKETALHLAVYYKNLQMIKLLVKYGIDVTI, and YDKTVLDIATDAKFSNIVKYLKKNSGKFRR. Residues 1026 to 1032 form a 4C4.1 epitope region; it reads EEVLSVD. A furin-like endopeptidase recognition region region spans residues 1196–1199; that stretch reads KFRR. The propeptide occupies 1200-1418; sequence EYKSSYGEHS…SEKKIQKISI (219 aa).

It belongs to the cationic peptide 01 (latrotoxin) family. 03 (alpha-latrotoxin) subfamily. In terms of assembly, homotetramer in membranes. In terms of processing, processed by furin-like proteases at both the N- and C-termini. In terms of tissue distribution, expressed in venom gland, cephalothorax, and abdomen tissues from both males and females.

It is found in the secreted. It localises to the target cell membrane. In terms of biological role, presynaptic neurotoxin that causes massive release of neurotransmitters from vertebrate (but not invertebrate) nerve terminals and endocrine cells via a complex mechanism involving activation of receptor(s) and toxin insertion into the plasma membrane with subsequent pore formation. Binds to neurexin-1-alpha (NRXN1) in a calcium dependent manner, adhesion G protein-coupled receptor L1 (ADGRL1, also termed latrophilin-1 and calcium-independent receptor of latrotoxin (CIRL)), and receptor-type tyrosine-protein phosphatase S (PTPRS), also termed PTP sigma. NRXN1 and PTPRS are suggested to provide a platform for binding and subsequent pore formation events. In contrast, binding to ADGRL1 does not involve oligomerization and channel formation, but direct downstream stimulation of the synaptic fusion machinery. The polypeptide is Alpha-latrotoxin-Lhe1a (Latrodectus hesperus (Western black widow spider)).